Reading from the N-terminus, the 641-residue chain is White-opaque regulator 3 (641 aa).

The segment covering 13–27 (ANVNHQQLSQDTNSI) has biased composition (polar residues). Disordered stretches follow at residues 13–38 (ANVN…QQQP), 146–245 (QLAS…PMTR), and 258–287 (PIIY…PEPR). Composition is skewed to low complexity over residues 28–38 (PQQQLQQQQQP) and 151–160 (QNQDQNQSQN). The segment covering 161-172 (RYEQSSMTSIHT) has biased composition (polar residues). The segment covering 173–184 (NDNSSSVNNSPN) has biased composition (low complexity). Residues 193-204 (STFQPQHSNEGS) are compositionally biased toward polar residues. 2 stretches are compositionally biased toward low complexity: residues 216–242 (QQQQ…PQQP) and 264–280 (SSNS…NSSS). The dksA C4-type zinc-finger motif lies at 317-337 (CRRCGSEIPLAERRFVLCPSC). 4 disordered regions span residues 366 to 409 (LSKE…KVCQ), 480 to 507 (MSHQ…PQPH), 522 to 550 (NSGV…HNGS), and 568 to 641 (LQLQ…YPNN). Basic and acidic residues predominate over residues 379–400 (QNNKSNEDQNNESRRGSQEKPA). The segment covering 486 to 495 (QPPPPPPPPL) has biased composition (pro residues). Over residues 522-533 (NSGVAGIQQPNN) the composition is skewed to polar residues. A compositionally biased stretch (low complexity) spans 569 to 579 (QLQQQQQQQQQ). Residues 597-606 (SFPPPPPPPL) are compositionally biased toward pro residues. Low complexity predominate over residues 610 to 641 (QHQGLQQYSHAQQQQQQQHQQQQPYHQEYPNN).

The protein resides in the nucleus. Transcription factor that modulates the white-opaque switch. This Candida albicans (strain SC5314 / ATCC MYA-2876) (Yeast) protein is White-opaque regulator 3 (WOR3).